The primary structure comprises 491 residues: Probable succinate-semialdehyde dehydrogenase [NADP(+)] (491 aa).

Residues 163–164 (WN), 187–190 (KPAE), and 241–242 (GS) contribute to the NADP(+) site. E263 functions as the Proton acceptor in the catalytic mechanism. L264 contacts NADP(+). C297 functions as the Nucleophile in the catalytic mechanism. Residue E394 participates in NADP(+) binding.

Belongs to the aldehyde dehydrogenase family.

The enzyme catalyses succinate semialdehyde + NADP(+) + H2O = succinate + NADPH + 2 H(+). It participates in amino-acid degradation; 4-aminobutanoate degradation. In terms of biological role, catalyzes the NADP(+) dependent oxidation of succinate semialdehyde to succinate. The protein is Probable succinate-semialdehyde dehydrogenase [NADP(+)] (gabD) of Sinorhizobium fredii (strain NBRC 101917 / NGR234).